We begin with the raw amino-acid sequence, 148 residues long: 3-dehydroquinate dehydratase (148 aa).

The active-site Proton acceptor is Tyr23. The substrate site is built by Asn74, His80, and Asp87. Residue His100 is the Proton donor of the active site. Substrate contacts are provided by residues 101–102 (IS) and Arg111.

Belongs to the type-II 3-dehydroquinase family. Homododecamer.

It carries out the reaction 3-dehydroquinate = 3-dehydroshikimate + H2O. It functions in the pathway metabolic intermediate biosynthesis; chorismate biosynthesis; chorismate from D-erythrose 4-phosphate and phosphoenolpyruvate: step 3/7. Functionally, catalyzes a trans-dehydration via an enolate intermediate. In Thermoanaerobacter pseudethanolicus (strain ATCC 33223 / 39E) (Clostridium thermohydrosulfuricum), this protein is 3-dehydroquinate dehydratase.